The chain runs to 189 residues: Probable nicotinate-nucleotide adenylyltransferase (189 aa).

It belongs to the NadD family.

It carries out the reaction nicotinate beta-D-ribonucleotide + ATP + H(+) = deamido-NAD(+) + diphosphate. It functions in the pathway cofactor biosynthesis; NAD(+) biosynthesis; deamido-NAD(+) from nicotinate D-ribonucleotide: step 1/1. Its function is as follows. Catalyzes the reversible adenylation of nicotinate mononucleotide (NaMN) to nicotinic acid adenine dinucleotide (NaAD). In Staphylococcus aureus (strain MRSA252), this protein is Probable nicotinate-nucleotide adenylyltransferase.